The chain runs to 519 residues: Chloroethene reductive dehalogenase (519 aa).

The tat-type signal signal peptide spans 1-43 (MSKFHKTISRRDFMKGLGLAGAGIGAVAASAPVFHDIDELVSS). 4Fe-4S ferredoxin-type domains are found at residues 388–420 (PTPP…QEDE) and 435–465 (LGYR…LENA). Residues cysteine 400, cysteine 403, cysteine 406, cysteine 410, cysteine 444, cysteine 448, cysteine 451, and cysteine 455 each coordinate [4Fe-4S] cluster.

It belongs to the PceA family. [4Fe-4S] cluster serves as cofactor. Requires corrinoid as cofactor. In terms of processing, predicted to be exported by the Tat system. The position of the signal peptide cleavage has been experimentally proven.

It localises to the cell membrane. It carries out the reaction chloroethene + AH2 = ethene + chloride + A + H(+). The enzyme catalyses (Z)-1,2-dichloroethene + AH2 = chloroethene + chloride + A + H(+). The catalysed reaction is 1,1-dichloroethene + AH2 = chloroethene + chloride + A + H(+). Catalyzes the reductive dechlorination of chloroethene (or vinyl chloride, VC) to ethene. Can also reduce all dichloroethene (DCE) isomers, but not tetrachloroethene (PCE) or trichloroethene (TCE), at high rates. Reduced methyl viologen can act as the artificial electron donor. This chain is Chloroethene reductive dehalogenase, found in Dehalococcoides mccartyi (strain VS).